A 630-amino-acid chain; its full sequence is Betaine/ectoine transporter LcoP (630 aa).

A compositionally biased stretch (polar residues) spans 1–13 (MSTNSGNNLPESQ). The tract at residues 1–28 (MSTNSGNNLPESQESPEEPHYPHDTHPG) is disordered. Residues 17–26 (EEPHYPHDTH) are compositionally biased toward basic and acidic residues. The next 12 membrane-spanning stretches (helical) occupy residues 47-67 (TVFG…ISSP), 85-105 (TGWL…YIAF), 125-145 (FSWI…FFGP), 177-197 (FHWG…LAYS), 230-250 (MAII…AIQV), 267-287 (ILIA…VSGV), 299-319 (ISLT…LFLL), 354-374 (WTAF…MFIA), 385-405 (FALI…TIFG), 436-456 (LPLY…FFVT), 479-499 (LIVV…LLTG), and 510-530 (LTIL…IAFI). The disordered stretch occupies residues 611–630 (WADGWTPESTEEGEVDAKKD).

Belongs to the BCCT transporter (TC 2.A.15) family.

It localises to the cell membrane. Uptake is activated by hyperosmotic stress. Shows a small but significant chill stimulation around 15 degrees Celsius. In terms of biological role, involved in the uptake of osmoprotectants. Can transport betaine and ectoine. Na(+) is probably the coupling ion. In Corynebacterium glutamicum (strain ATCC 13032 / DSM 20300 / JCM 1318 / BCRC 11384 / CCUG 27702 / LMG 3730 / NBRC 12168 / NCIMB 10025 / NRRL B-2784 / 534), this protein is Betaine/ectoine transporter LcoP.